We begin with the raw amino-acid sequence, 147 residues long: Hemoglobin subunit gamma (147 aa).

In terms of domain architecture, Globin spans 3-147 (NFTAEDKAAI…VASALASRYH (145 aa)). Residues H64 and H93 each coordinate heme b.

This sequence belongs to the globin family. In terms of assembly, heterotetramer of two alpha chains and two gamma chains in fetal hemoglobin (Hb F). In terms of tissue distribution, red blood cells.

In terms of biological role, gamma chains make up the fetal hemoglobin F, in combination with alpha chains. This chain is Hemoglobin subunit gamma (HBG), found in Alouatta belzebul (Red-handed howler monkey).